A 201-amino-acid polypeptide reads, in one-letter code: Recombination protein RecR (201 aa).

The C4-type zinc finger occupies 60-75 (CSRCGNVDTVDPCTVC). The Toprim domain occupies 83–178 (SVIIVVEDVS…KITRLAHGVP (96 aa)).

The protein belongs to the RecR family.

Its function is as follows. May play a role in DNA repair. It seems to be involved in an RecBC-independent recombinational process of DNA repair. It may act with RecF and RecO. The chain is Recombination protein RecR from Rhizobium etli (strain CIAT 652).